Reading from the N-terminus, the 107-residue chain is Ferredoxin-1 (107 aa).

2 consecutive 4Fe-4S ferredoxin-type domains span residues 2–30 and 31–60; these read AFVVTDNCIKCKYTDCVEVCPVDCFYEGP and NFLVIHPDECIDCALCEPECPAQAIFSEDE. [3Fe-4S] cluster-binding residues include cysteine 9 and cysteine 17. 4 residues coordinate [4Fe-4S] cluster: cysteine 21, cysteine 40, cysteine 43, and cysteine 46. Cysteine 50 lines the [3Fe-4S] cluster pocket. The interval 84 to 107 is disordered; sequence EKKDPLPDAEDWDGVKGKLQHLER. A compositionally biased stretch (basic and acidic residues) spans 96 to 107; that stretch reads DGVKGKLQHLER.

Requires [4Fe-4S] cluster as cofactor. The cofactor is [3Fe-4S] cluster.

Its function is as follows. Ferredoxins are iron-sulfur proteins that transfer electrons in a wide variety of metabolic reactions. This ferredoxin could play a role in regulating gene expression by interacting directly with DNA. The sequence is that of Ferredoxin-1 (fdxA) from Azotobacter vinelandii.